A 361-amino-acid polypeptide reads, in one-letter code: Peptide chain release factor 1 (361 aa).

N5-methylglutamine is present on Gln-238.

Belongs to the prokaryotic/mitochondrial release factor family. Post-translationally, methylated by PrmC. Methylation increases the termination efficiency of RF1.

It is found in the cytoplasm. Its function is as follows. Peptide chain release factor 1 directs the termination of translation in response to the peptide chain termination codons UAG and UAA. In Mesomycoplasma hyopneumoniae (strain J / ATCC 25934 / NCTC 10110) (Mycoplasma hyopneumoniae), this protein is Peptide chain release factor 1.